A 447-amino-acid polypeptide reads, in one-letter code: tRNA-2-methylthio-N(6)-dimethylallyladenosine synthase (447 aa).

Positions 10–128 constitute an MTTase N-terminal domain; that stretch reads KLFCISTYGC…FPEYLHRVLQ (119 aa). [4Fe-4S] cluster contacts are provided by cysteine 19, cysteine 55, cysteine 89, cysteine 165, cysteine 169, and cysteine 172. One can recognise a Radical SAM core domain in the interval 151 to 382; it reads RKSDVKAFVT…EAINKKVVIK (232 aa). The TRAM domain occupies 384–447; it reads KEYEGKVVEV…PFSLIGEIVE (64 aa).

This sequence belongs to the methylthiotransferase family. MiaB subfamily. In terms of assembly, monomer. [4Fe-4S] cluster serves as cofactor.

The protein localises to the cytoplasm. It carries out the reaction N(6)-dimethylallyladenosine(37) in tRNA + (sulfur carrier)-SH + AH2 + 2 S-adenosyl-L-methionine = 2-methylsulfanyl-N(6)-dimethylallyladenosine(37) in tRNA + (sulfur carrier)-H + 5'-deoxyadenosine + L-methionine + A + S-adenosyl-L-homocysteine + 2 H(+). In terms of biological role, catalyzes the methylthiolation of N6-(dimethylallyl)adenosine (i(6)A), leading to the formation of 2-methylthio-N6-(dimethylallyl)adenosine (ms(2)i(6)A) at position 37 in tRNAs that read codons beginning with uridine. In Clostridium perfringens (strain SM101 / Type A), this protein is tRNA-2-methylthio-N(6)-dimethylallyladenosine synthase.